The following is a 473-amino-acid chain: MEMQMSNSDRYRIEHDSMGDLRVPIDALWGAQTQRAIENFPISGRSMPQGFIHALGFIKAAAAKVNAELGLLPKSMAKEIEAAALDVAAGRYDAEFPVDIYQTGSGTSSNMNANEVIATLAMRATKGPIHPNDHVNLGQSSNDVVPTAIRISATLAVQGRLLPALKHLRKMINKRARGLGSVVKTGRTHLMDAMPLTFAQEFGAWSAQIVSAEARLNDTLKRLHRLPLGGTAIGTGINTDPHFGRNAVKVLSALTGIHFESANNKFEGLAAQDDLVELSGQFNTLAVALMKIANDLRWMNAGPLAGLGEIELPALQPGSSIMPGKVNPVIPEAVVMVASQVIGHHTAVTVAGQSGNFQLNVTLPLIAYNLLESATLLGNVVMLLADKVIVGLKVRQDRVQEVLERNPILVTALNPIIGYEKAAVIAKRAYKEHRPVLEVACEESNLNPVELARLLDPAALTEGGIHVVGGGGG.

Substrate is bound by residues 105–107 (SGT), 130–133 (HPND), 140–142 (SSN), and threonine 188. The active-site Proton donor/acceptor is histidine 189. Serine 319 is an active-site residue. Residues serine 320 and 325 to 327 (KVN) each bind substrate.

It belongs to the class-II fumarase/aspartase family. Fumarase subfamily. In terms of assembly, homotetramer.

It is found in the cytoplasm. It catalyses the reaction (S)-malate = fumarate + H2O. Its pathway is carbohydrate metabolism; tricarboxylic acid cycle; (S)-malate from fumarate: step 1/1. In terms of biological role, involved in the TCA cycle. Catalyzes the stereospecific interconversion of fumarate to L-malate. This is Fumarate hydratase class II from Xylella fastidiosa (strain Temecula1 / ATCC 700964).